A 356-amino-acid polypeptide reads, in one-letter code: Protein-arginine kinase (356 aa).

Positions 24-256 constitute a Phosphagen kinase C-terminal domain; sequence IIISSRVRVA…RQILAQEQAA (233 aa). ATP is bound by residues 27 to 31, histidine 93, arginine 127, 178 to 182, and 209 to 214; these read SSRVR, RASVM, and RGLYGE. An RDXXRA motif of the pArg binding pocket involved in allosteric regulation motif is present at residues 339–344; that stretch reads RDIFRA.

Belongs to the ATP:guanido phosphotransferase family.

It carries out the reaction L-arginyl-[protein] + ATP = N(omega)-phospho-L-arginyl-[protein] + ADP + H(+). Appears to be allosterically activated by the binding of pArg-containing polypeptides to the pArg-binding pocket localized in the C-terminal domain of McsB. In terms of biological role, catalyzes the specific phosphorylation of arginine residues in proteins. In Pelotomaculum thermopropionicum (strain DSM 13744 / JCM 10971 / SI), this protein is Protein-arginine kinase.